Here is a 65-residue protein sequence, read N- to C-terminus: Large ribosomal subunit protein bL35 (65 aa).

It belongs to the bacterial ribosomal protein bL35 family.

The sequence is that of Large ribosomal subunit protein bL35 from Thermoanaerobacter pseudethanolicus (strain ATCC 33223 / 39E) (Clostridium thermohydrosulfuricum).